The sequence spans 332 residues: RING-H2 finger protein ATL81 (332 aa).

The first 19 residues, 1–19 (MYDLTFLLISLFPIDITLP), serve as a signal peptide directing secretion. A helical transmembrane segment spans residues 76-96 (IVLTGSLLFIIFTGFFSFFFC). The RING-type; atypical zinc-finger motif lies at 154-196 (CSICLTEFMDDDTIRLISTCNHSFHTICIDLWFEGHKTCPVCR).

The protein belongs to the RING-type zinc finger family. ATL subfamily.

It is found in the membrane. The enzyme catalyses S-ubiquitinyl-[E2 ubiquitin-conjugating enzyme]-L-cysteine + [acceptor protein]-L-lysine = [E2 ubiquitin-conjugating enzyme]-L-cysteine + N(6)-ubiquitinyl-[acceptor protein]-L-lysine.. It participates in protein modification; protein ubiquitination. The chain is RING-H2 finger protein ATL81 (ATL81) from Arabidopsis thaliana (Mouse-ear cress).